A 271-amino-acid polypeptide reads, in one-letter code: Putative hydro-lyase blr2921 (271 aa).

This sequence belongs to the D-glutamate cyclase family.

This is Putative hydro-lyase blr2921 from Bradyrhizobium diazoefficiens (strain JCM 10833 / BCRC 13528 / IAM 13628 / NBRC 14792 / USDA 110).